A 345-amino-acid polypeptide reads, in one-letter code: Glycerol-3-phosphate dehydrogenase [NAD(P)+] (345 aa).

The NADPH site is built by serine 23, tyrosine 24, histidine 44, and lysine 118. Sn-glycerol 3-phosphate is bound by residues lysine 118, glycine 147, and threonine 149. Position 151 (alanine 151) interacts with NADPH. 5 residues coordinate sn-glycerol 3-phosphate: lysine 203, aspartate 256, serine 266, arginine 267, and asparagine 268. Residue lysine 203 is the Proton acceptor of the active site. Arginine 267 is an NADPH binding site. NADPH is bound by residues valine 291 and glutamate 293.

The protein belongs to the NAD-dependent glycerol-3-phosphate dehydrogenase family.

The protein resides in the cytoplasm. It catalyses the reaction sn-glycerol 3-phosphate + NAD(+) = dihydroxyacetone phosphate + NADH + H(+). It carries out the reaction sn-glycerol 3-phosphate + NADP(+) = dihydroxyacetone phosphate + NADPH + H(+). Its pathway is membrane lipid metabolism; glycerophospholipid metabolism. Catalyzes the reduction of the glycolytic intermediate dihydroxyacetone phosphate (DHAP) to sn-glycerol 3-phosphate (G3P), the key precursor for phospholipid synthesis. The polypeptide is Glycerol-3-phosphate dehydrogenase [NAD(P)+] (Vibrio campbellii (strain ATCC BAA-1116)).